Here is a 534-residue protein sequence, read N- to C-terminus: CD276 antigen (534 aa).

The N-terminal stretch at 1–28 is a signal peptide; sequence MLRRRGSPGMGVHVGAALGALWFCLTGA. The Ig-like V-type 1 domain occupies 29 to 139; sequence LEVQVPEDPV…GSAAVSLQVA (111 aa). Over 29–466 the chain is Extracellular; sequence LEVQVPEDPV…GQPMTFPPEA (438 aa). Disulfide bonds link Cys50–Cys122, Cys165–Cys220, Cys268–Cys340, and Cys383–Cys438. N-linked (GlcNAc...) asparagine glycans are attached at residues Asn104, Asn189, Asn215, Asn322, Asn407, and Asn433. The Ig-like C2-type 1 domain maps to 145–238; that stretch reads PSMTLEPNKD…QDAHSSVTIT (94 aa). The Ig-like V-type 2 domain maps to 243–357; sequence PTGAVEVQVP…GSAAVSLQVA (115 aa). The Ig-like C2-type 2 domain occupies 363 to 456; sequence PSMTLEPNKD…QDAHGSVTIT (94 aa). A helical transmembrane segment spans residues 467-487; that stretch reads LWVTVGLSVCLIALLVALAFV. The Cytoplasmic portion of the chain corresponds to 488 to 534; that stretch reads CWRKIKQSCEEENAGAEDQDGEGEGSKTALQPLKHSDSKEDDGQEIA. The segment covering 498–510 has biased composition (acidic residues); sequence EENAGAEDQDGEG. The disordered stretch occupies residues 498-534; that stretch reads EENAGAEDQDGEGEGSKTALQPLKHSDSKEDDGQEIA. A Phosphoserine modification is found at Ser525.

It belongs to the immunoglobulin superfamily. BTN/MOG family. In terms of assembly, interacts with TREML2 and this interaction enhances T-cell activation. Ubiquitous but not detectable in peripheral blood lymphocytes or granulocytes. Weakly expressed in resting monocytes. Expressed in dendritic cells derived from monocytes. Expressed in epithelial cells of sinonasal tissue. Expressed in extravillous trophoblast cells and Hofbauer cells of the first trimester placenta and term placenta.

Its subcellular location is the membrane. Its function is as follows. May participate in the regulation of T-cell-mediated immune response. May play a protective role in tumor cells by inhibiting natural-killer mediated cell lysis as well as a role of marker for detection of neuroblastoma cells. May be involved in the development of acute and chronic transplant rejection and in the regulation of lymphocytic activity at mucosal surfaces. Could also play a key role in providing the placenta and fetus with a suitable immunological environment throughout pregnancy. Both isoform 1 and isoform 2 appear to be redundant in their ability to modulate CD4 T-cell responses. Isoform 2 is shown to enhance the induction of cytotoxic T-cells and selectively stimulates interferon gamma production in the presence of T-cell receptor signaling. This chain is CD276 antigen (CD276), found in Homo sapiens (Human).